Consider the following 159-residue polypeptide: U-actitoxin-Avd13b (159 aa).

The N-terminal stretch at 1 to 18 (MKSIFLVFFAVCLVKAEA) is a signal peptide. A propeptide spanning residues 19–26 (GKGRKREP) is cleaved from the precursor. Disulfide bonds link Cys33/Cys45 and Cys36/Cys52. Residues 59 to 60 (EP) constitute a propeptide that is removed on maturation. 2 disulfide bridges follow: Cys67–Cys79 and Cys70–Cys86. Positions 93–94 (EP) are excised as a propeptide. 2 disulfide bridges follow: Cys101–Cys113 and Cys104–Cys120. Residues 127–128 (EP) constitute a propeptide that is removed on maturation. 2 disulfides stabilise this stretch: Cys135–Cys147 and Cys138–Cys154.

This sequence belongs to the sea anemone BBH family.

Its subcellular location is the secreted. It localises to the nematocyst. In terms of biological role, inhibits ion channels. The protein is U-actitoxin-Avd13b of Anemonia viridis (Snakelocks anemone).